Here is a 135-residue protein sequence, read N- to C-terminus: Methylglyoxal synthase (135 aa).

An MGS-like domain is found at 1-135; it reads MQKTLALVAH…GLYERAVPEF (135 aa). Residues His-10, Lys-14, 36-39, and 56-57 each bind substrate; these read TGTT and SG. Asp-62 (proton donor/acceptor) is an active-site residue. A substrate-binding site is contributed by His-89.

It belongs to the methylglyoxal synthase family.

The enzyme catalyses dihydroxyacetone phosphate = methylglyoxal + phosphate. Its function is as follows. Catalyzes the formation of methylglyoxal from dihydroxyacetone phosphate. The chain is Methylglyoxal synthase from Pseudoalteromonas atlantica (strain T6c / ATCC BAA-1087).